The chain runs to 120 residues: Large ribosomal subunit protein uL18 (120 aa).

It belongs to the universal ribosomal protein uL18 family. As to quaternary structure, part of the 50S ribosomal subunit; part of the 5S rRNA/L5/L18/L25 subcomplex. Contacts the 5S and 23S rRNAs.

Its function is as follows. This is one of the proteins that bind and probably mediate the attachment of the 5S RNA into the large ribosomal subunit, where it forms part of the central protuberance. This chain is Large ribosomal subunit protein uL18, found in Xanthobacter autotrophicus (strain ATCC BAA-1158 / Py2).